Here is a 457-residue protein sequence, read N- to C-terminus: Cysteine--tRNA ligase (457 aa).

C30 is a Zn(2+) binding site. The 'HIGH' region motif lies at 32 to 42 (PTVYDRAHLGN). Residues C213, H238, and E242 each coordinate Zn(2+). The short motif at 271 to 275 (KMSKS) is the 'KMSKS' region element. An ATP-binding site is contributed by K274.

Belongs to the class-I aminoacyl-tRNA synthetase family. In terms of assembly, monomer. The cofactor is Zn(2+).

It is found in the cytoplasm. It catalyses the reaction tRNA(Cys) + L-cysteine + ATP = L-cysteinyl-tRNA(Cys) + AMP + diphosphate. The sequence is that of Cysteine--tRNA ligase from Ruegeria sp. (strain TM1040) (Silicibacter sp.).